The primary structure comprises 270 residues: uncharacterized protein (270 aa).

The N-terminal stretch at 1 to 22 (MEYIKKIALYMSVLLLIIFIGG) is a signal peptide. Cys23 carries the N-palmitoyl cysteine lipid modification. The S-diacylglycerol cysteine moiety is linked to residue Cys23.

It belongs to the staphylococcal tandem lipoprotein family.

It is found in the cell membrane. This is an uncharacterized protein from Staphylococcus aureus (strain USA300).